The chain runs to 568 residues: Acetate--CoA ligase CCL3 (568 aa).

ATP is bound by residues T204 to K212, H340 to S345, D437, I449 to R452, and K547. Residues T272–H340 are SBD1. Positions T341–Y417 are SBD2.

It belongs to the ATP-dependent AMP-binding enzyme family. In terms of tissue distribution, mostly expressed in glandular trichomes (lupulin glands) after flowering and in old leaves, and, to a lower extent, in stems, young leaves, cones and flowers.

Its subcellular location is the cytoplasm. It is found in the cytosol. The enzyme catalyses acetate + ATP + CoA = acetyl-CoA + AMP + diphosphate. It catalyses the reaction propanoate + ATP + CoA = propanoyl-CoA + AMP + diphosphate. The catalysed reaction is butanoate + ATP + CoA = butanoyl-CoA + AMP + diphosphate. It carries out the reaction 3-methylbutanoate + ATP + CoA = 3-methylbutanoyl-CoA + AMP + diphosphate. The enzyme catalyses pentanoate + ATP + CoA = pentanoyl-CoA + AMP + diphosphate. It catalyses the reaction hexanoate + ATP + CoA = hexanoyl-CoA + AMP + diphosphate. The catalysed reaction is 2-methylpropanoate + ATP + CoA = 2-methylpropanoyl-CoA + AMP + diphosphate. It carries out the reaction 2-methylbutanoate + ATP + CoA = 2-methylbutanoyl-CoA + AMP + diphosphate. The enzyme catalyses 2-methylpentanoate + ATP + CoA = 2-methylpentanoyl-CoA + AMP + diphosphate. It catalyses the reaction 3-methylpentanoate + ATP + CoA = 3-methylpentanoyl-CoA + AMP + diphosphate. The catalysed reaction is 4-methylpentanoate + ATP + CoA = 4-methylpentanoyl-CoA + AMP + diphosphate. The protein operates within secondary metabolite biosynthesis. In terms of biological role, involved in the biosynthesis of prenylated phenolics natural products which contribute to the bitter taste of beer and display broad biological activities. Catalyzes the ligation of CoA on propanoate to produce propanoyl-CoA. Can also use 2-methylpropanoate (isobutyric acid), acetate, butanoate, isovalerate, pentanoate, hexanoate, 2-methylbutanoate, 2-methylpentanoate, 3-methylpentanoate and 4-methylpentanoate as substrates with a lower efficiency. Triggers the formation of very short chain acyl-CoAs from the corresponding fatty acids, including acetic acid, propanoic acid, butyric acid and its isomer. The polypeptide is Acetate--CoA ligase CCL3 (Humulus lupulus (European hop)).